The primary structure comprises 412 residues: Light-independent protochlorophyllide reductase subunit N (412 aa).

The [4Fe-4S] cluster site is built by Cys-16, Cys-41, and Cys-102.

Belongs to the BchN/ChlN family. As to quaternary structure, protochlorophyllide reductase is composed of three subunits; ChlL, ChlN and ChlB. Forms a heterotetramer of two ChlB and two ChlN subunits. [4Fe-4S] cluster is required as a cofactor.

It catalyses the reaction chlorophyllide a + oxidized 2[4Fe-4S]-[ferredoxin] + 2 ADP + 2 phosphate = protochlorophyllide a + reduced 2[4Fe-4S]-[ferredoxin] + 2 ATP + 2 H2O. It participates in porphyrin-containing compound metabolism; chlorophyll biosynthesis (light-independent). Its function is as follows. Component of the dark-operative protochlorophyllide reductase (DPOR) that uses Mg-ATP and reduced ferredoxin to reduce ring D of protochlorophyllide (Pchlide) to form chlorophyllide a (Chlide). This reaction is light-independent. The NB-protein (ChlN-ChlB) is the catalytic component of the complex. This is Light-independent protochlorophyllide reductase subunit N from Synechococcus sp. (strain RCC307).